The following is a 78-amino-acid chain: Exodeoxyribonuclease 7 small subunit (78 aa).

This sequence belongs to the XseB family. As to quaternary structure, heterooligomer composed of large and small subunits.

It localises to the cytoplasm. The enzyme catalyses Exonucleolytic cleavage in either 5'- to 3'- or 3'- to 5'-direction to yield nucleoside 5'-phosphates.. Functionally, bidirectionally degrades single-stranded DNA into large acid-insoluble oligonucleotides, which are then degraded further into small acid-soluble oligonucleotides. This chain is Exodeoxyribonuclease 7 small subunit, found in Actinobacillus succinogenes (strain ATCC 55618 / DSM 22257 / CCUG 43843 / 130Z).